Here is a 186-residue protein sequence, read N- to C-terminus: Elongation factor P (186 aa).

The protein belongs to the elongation factor P family.

The protein localises to the cytoplasm. The protein operates within protein biosynthesis; polypeptide chain elongation. Involved in peptide bond synthesis. Stimulates efficient translation and peptide-bond synthesis on native or reconstituted 70S ribosomes in vitro. Probably functions indirectly by altering the affinity of the ribosome for aminoacyl-tRNA, thus increasing their reactivity as acceptors for peptidyl transferase. In Synechococcus sp. (strain RCC307), this protein is Elongation factor P.